We begin with the raw amino-acid sequence, 292 residues long: Tyrosine isonitrile desaturase (292 aa).

Fe cation contacts are provided by His-110, Asp-112, and His-259.

It belongs to the TfdA dioxygenase family. It depends on Fe(2+) as a cofactor.

It catalyses the reaction (2S)-3-(4-hydroxyphenyl)-2-isocyanopropanoate + 2-oxoglutarate + O2 = (2E)-3-(4-hydroxyphenyl)-2-isocyanoprop-2-enoate + succinate + CO2 + H2O. In terms of biological role, catalyzes the 2-oxoglutarate-dependent oxidation of tyrosine isonitrile. The chain is Tyrosine isonitrile desaturase from Erwinia amylovora (strain CFBP1430).